Reading from the N-terminus, the 61-residue chain is MELKTLREKSADELKAHLIDLRKEQFSVRMQQVTGQLPKTHDIRRVRREIARVKTLLGSTK.

Belongs to the universal ribosomal protein uL29 family.

The polypeptide is Large ribosomal subunit protein uL29 (Stenotrophomonas maltophilia (strain R551-3)).